The sequence spans 335 residues: Ribosomal RNA large subunit methyltransferase F (335 aa).

The protein belongs to the methyltransferase superfamily. METTL16/RlmF family.

It is found in the cytoplasm. It catalyses the reaction adenosine(1618) in 23S rRNA + S-adenosyl-L-methionine = N(6)-methyladenosine(1618) in 23S rRNA + S-adenosyl-L-homocysteine + H(+). In terms of biological role, specifically methylates the adenine in position 1618 of 23S rRNA. The polypeptide is Ribosomal RNA large subunit methyltransferase F (Yersinia enterocolitica serotype O:8 / biotype 1B (strain NCTC 13174 / 8081)).